A 350-amino-acid polypeptide reads, in one-letter code: Biotin synthase (350 aa).

Residues 41–268 form the Radical SAM core domain; that stretch reads NEVQISRLLS…LSRVRLSAGR (228 aa). Residues Cys56, Cys60, and Cys63 each coordinate [4Fe-4S] cluster. [2Fe-2S] cluster contacts are provided by Cys100, Cys131, Cys191, and Arg263.

Belongs to the radical SAM superfamily. Biotin synthase family. Homodimer. [4Fe-4S] cluster is required as a cofactor. The cofactor is [2Fe-2S] cluster.

It carries out the reaction (4R,5S)-dethiobiotin + (sulfur carrier)-SH + 2 reduced [2Fe-2S]-[ferredoxin] + 2 S-adenosyl-L-methionine = (sulfur carrier)-H + biotin + 2 5'-deoxyadenosine + 2 L-methionine + 2 oxidized [2Fe-2S]-[ferredoxin]. The protein operates within cofactor biosynthesis; biotin biosynthesis; biotin from 7,8-diaminononanoate: step 2/2. In terms of biological role, catalyzes the conversion of dethiobiotin (DTB) to biotin by the insertion of a sulfur atom into dethiobiotin via a radical-based mechanism. The protein is Biotin synthase of Shewanella oneidensis (strain ATCC 700550 / JCM 31522 / CIP 106686 / LMG 19005 / NCIMB 14063 / MR-1).